Here is a 146-residue protein sequence, read N- to C-terminus: Leghemoglobin Lb120-8 (146 aa).

Residues G2–N146 enclose the Globin domain. Residues Y24 and Y29 each carry the nitrated tyrosine modification. S44 contacts heme b. Position 44 is a phosphoserine (S44). Position 61 (H61) interacts with O2. Heme b contacts are provided by K64, H93, and K96. A Nitrated tyrosine modification is found at Y134.

It belongs to the plant globin family. In terms of assembly, monomer. Post-translationally, nitrated in effective nodules and particularly in hypoxic conditions; this mechanism may play a protective role in the symbiosis by buffering toxic peroxynitrite NO(2)(-). Nitration level decrease during nodule senescence. Phosphorylation at Ser-44 disrupts the molecular environment of its porphyrin ring oxygen binding pocket, thus leading to a reduced oxygen consumption and to the delivery of oxygen O(2) to symbiosomes. Root nodules.

Its subcellular location is the cytoplasm. It localises to the cytosol. The protein resides in the nucleus. Functionally, leghemoglobin that reversibly binds oxygen O(2) through a pentacoordinated heme iron. In root nodules, facilitates the diffusion of oxygen to the bacteroids while preventing the bacterial nitrogenase from being inactivated by buffering dioxygen, nitric oxide and carbon monoxide, and promoting the formation of reactive oxygen species (ROS, e.g. H(2)O(2)). This role is essential for symbiotic nitrogen fixation (SNF). In Pisum sativum (Garden pea), this protein is Leghemoglobin Lb120-8.